The following is a 286-amino-acid chain: Bifunctional protein FolD (286 aa).

Residues 165–167 (GRS) and Ser-190 contribute to the NADP(+) site.

It belongs to the tetrahydrofolate dehydrogenase/cyclohydrolase family. Homodimer.

It catalyses the reaction (6R)-5,10-methylene-5,6,7,8-tetrahydrofolate + NADP(+) = (6R)-5,10-methenyltetrahydrofolate + NADPH. The catalysed reaction is (6R)-5,10-methenyltetrahydrofolate + H2O = (6R)-10-formyltetrahydrofolate + H(+). The protein operates within one-carbon metabolism; tetrahydrofolate interconversion. Its function is as follows. Catalyzes the oxidation of 5,10-methylenetetrahydrofolate to 5,10-methenyltetrahydrofolate and then the hydrolysis of 5,10-methenyltetrahydrofolate to 10-formyltetrahydrofolate. The protein is Bifunctional protein FolD of Staphylococcus aureus (strain bovine RF122 / ET3-1).